Consider the following 194-residue polypeptide: Extracellular globin-E1 (194 aa).

2 consecutive Globin domains span residues 1 to 45 and 55 to 194; these read DISH…MGLS and GLSG…LRQA. His150 provides a ligand contact to heme b.

It belongs to the globin family. In terms of assembly, artemia hemoglobin is a dimer of two similar sized subunits. Each subunit represents a globin chain which exists in two forms (alpha and beta), thus making possible three different phenotypes (HB1, alpha(2), HB2, alpha/beta, HB3, beta(2)). The globin chain is a polymer of eight heme-binding covalently linked domains.

The protein is Extracellular globin-E1 of Artemia sp. (Brine shrimp).